The sequence spans 72 residues: Putative snRNP Sm-like protein (72 aa).

Residues Arg4 to Pro72 form the Sm domain.

The protein belongs to the snRNP Sm proteins family.

The chain is Putative snRNP Sm-like protein from Methanosarcina acetivorans (strain ATCC 35395 / DSM 2834 / JCM 12185 / C2A).